The sequence spans 728 residues: Catalase-peroxidase (728 aa).

A cross-link (tryptophyl-tyrosyl-methioninium (Trp-Tyr) (with M-251)) is located at residues 97-225; sequence WHSAGTYRIA…LAAVMMGLIY (129 aa). The active-site Proton acceptor is histidine 98. The tryptophyl-tyrosyl-methioninium (Tyr-Met) (with W-97) cross-link spans 225-251; sequence YVNPEGVDGNPDPLRTAQDIRITFARM. Residue histidine 266 coordinates heme b.

The protein belongs to the peroxidase family. Peroxidase/catalase subfamily. Homodimer or homotetramer. Heme b is required as a cofactor. Post-translationally, formation of the three residue Trp-Tyr-Met cross-link is important for the catalase, but not the peroxidase activity of the enzyme.

The catalysed reaction is H2O2 + AH2 = A + 2 H2O. The enzyme catalyses 2 H2O2 = O2 + 2 H2O. In terms of biological role, bifunctional enzyme with both catalase and broad-spectrum peroxidase activity. The sequence is that of Catalase-peroxidase from Shewanella putrefaciens (strain CN-32 / ATCC BAA-453).